Here is a 729-residue protein sequence, read N- to C-terminus: Glycine--tRNA ligase, mitochondrial 1 (729 aa).

The residue at position 1 (Met-1) is an N-acetylmethionine. The N-terminal 28 residues, Met-1–Arg-28, are a transit peptide targeting the mitochondrion. Residues Ser-50–Ser-106 form the WHEP-TRS domain. Glu-296 provides a ligand contact to glycine. Residues Arg-328–Glu-330 and Arg-339–Val-340 contribute to the ATP site. Glu-347 is a glycine binding site. Glu-454–Cys-455 serves as a coordination point for ATP. Residue Glu-575–Ser-577 coordinates glycine. Arg-582 contacts ATP.

It belongs to the class-II aminoacyl-tRNA synthetase family. As to quaternary structure, homodimer.

It localises to the mitochondrion. The protein resides in the cytoplasm. The protein localises to the cytosol. It carries out the reaction tRNA(Gly) + glycine + ATP = glycyl-tRNA(Gly) + AMP + diphosphate. The catalysed reaction is 2 ATP + H(+) = P(1),P(4)-bis(5'-adenosyl) tetraphosphate + diphosphate. In terms of biological role, catalyzes the ATP-dependent ligation of glycine to the 3'-end of its cognate tRNA, via the formation of an aminoacyl-adenylate intermediate (Gly-AMP). Also produces diadenosine tetraphosphate (Ap4A), a universal pleiotropic signaling molecule needed for cell regulation pathways, by direct condensation of 2 ATPs. Thereby, may play a special role in Ap4A homeostasis. This is Glycine--tRNA ligase, mitochondrial 1 from Arabidopsis thaliana (Mouse-ear cress).